The chain runs to 101 residues: Small ribosomal subunit protein uS14 (101 aa).

This sequence belongs to the universal ribosomal protein uS14 family. Part of the 30S ribosomal subunit. Contacts proteins S3 and S10.

Its function is as follows. Binds 16S rRNA, required for the assembly of 30S particles and may also be responsible for determining the conformation of the 16S rRNA at the A site. This chain is Small ribosomal subunit protein uS14, found in Idiomarina loihiensis (strain ATCC BAA-735 / DSM 15497 / L2-TR).